Here is a 295-residue protein sequence, read N- to C-terminus: MFKSGFVTIVGRPNVGKSTLLNYIMGEKLSIVSNKPQTTRNNIQTILTGDDYQIVFVDTPGIHKPKHKLGEYMVNSAKDSTNDVDLVLFLTNPDEEIGKGDKFILESLKDKKCPVYLVLNKIDESTPERVAKSLEMYSSEFNFKEIVPIAAIKGKNVDTLVDLMKTELPEGPKYYPEDMITDVPERFVVSEIVREKALRCLRDEVPHGIAVDIIQMKQSDNGTYHIEVDLICEKDSHKGIIIGKNGQMLKKIGETSRYELERFLRTKVNVKIWVKVRKEWRDNQNLLKELGYKKK.

In terms of domain architecture, Era-type G spans 3–170 (KSGFVTIVGR…VDLMKTELPE (168 aa)). The G1 stretch occupies residues 11-18 (GRPNVGKS). 11 to 18 (GRPNVGKS) lines the GTP pocket. A G2 region spans residues 37 to 41 (QTTRN). Positions 58 to 61 (DTPG) are G3. GTP is bound by residues 58–62 (DTPGI) and 120–123 (NKID). A G4 region spans residues 120–123 (NKID). Residues 149–151 (IAA) form a G5 region. Positions 201 to 278 (LRDEVPHGIA…NVKIWVKVRK (78 aa)) constitute a KH type-2 domain.

This sequence belongs to the TRAFAC class TrmE-Era-EngA-EngB-Septin-like GTPase superfamily. Era GTPase family. In terms of assembly, monomer.

The protein resides in the cytoplasm. The protein localises to the cell membrane. An essential GTPase that binds both GDP and GTP, with rapid nucleotide exchange. Plays a role in 16S rRNA processing and 30S ribosomal subunit biogenesis and possibly also in cell cycle regulation and energy metabolism. The chain is GTPase Era from Clostridium botulinum (strain Alaska E43 / Type E3).